The sequence spans 389 residues: Chitinase-3-like protein 1 (389 aa).

The N-terminal stretch at 1 to 29 (MHTSTEARMGMRAALTGFAVLMLLQSCSA) is a signal peptide. Positions 30 to 389 (YKLVCYFTSW…LTNAIKDALA (360 aa)) constitute a GH18 domain. An intrachain disulfide couples C34 to C59. An N-linked (GlcNAc...) asparagine glycan is attached at N68. Chitin is bound by residues 79–80 (EW), 106–109 (GGWK), Y150, and 213–216 (MTYD). The cysteines at positions 309 and 372 are disulfide-linked. The segment at 333–347 (QWVGYEDKESVKNKV) is important for AKT1 activation and IL8 production. W361 serves as a coordination point for chitin.

It belongs to the glycosyl hydrolase 18 family. As to quaternary structure, monomer. As to expression, detected in lung in pulmonary macrophages and alveolar type 2 cells and in bronchoalveolar lavage (BAL) fluids. Expressed in mammary tumor cells (at protein level). Expressed in lung. Not detected in non-inflammatory colon.

It localises to the secreted. It is found in the extracellular space. The protein resides in the cytoplasm. Its subcellular location is the endoplasmic reticulum. Functionally, carbohydrate-binding lectin with a preference for chitin. Has no chitinase activity. May play a role in tissue remodeling and in the capacity of cells to respond to and cope with changes in their environment. Plays a role in T-helper cell type 2 (Th2) inflammatory response and IL-13-induced inflammation, regulating allergen sensitization, inflammatory cell apoptosis, dendritic cell accumulation and M2 macrophage differentiation. Facilitates invasion of pathogenic enteric bacteria into colonic mucosa and lymphoid organs. Mediates activation of AKT1 signaling pathway and subsequent IL8 production in colonic epithelial cells. Regulates antibacterial responses in lung by contributing to macrophage bacterial killing, controlling bacterial dissemination and augmenting host tolerance. Also regulates hyperoxia-induced injury, inflammation and epithelial apoptosis in lung. The polypeptide is Chitinase-3-like protein 1 (Chi3l1) (Mus musculus (Mouse)).